Here is a 132-residue protein sequence, read N- to C-terminus: Ribosome-binding factor A (132 aa).

Belongs to the RbfA family. In terms of assembly, monomer. Binds 30S ribosomal subunits, but not 50S ribosomal subunits or 70S ribosomes.

It localises to the cytoplasm. One of several proteins that assist in the late maturation steps of the functional core of the 30S ribosomal subunit. Associates with free 30S ribosomal subunits (but not with 30S subunits that are part of 70S ribosomes or polysomes). Required for efficient processing of 16S rRNA. May interact with the 5'-terminal helix region of 16S rRNA. The polypeptide is Ribosome-binding factor A (Burkholderia multivorans (strain ATCC 17616 / 249)).